We begin with the raw amino-acid sequence, 508 residues long: MNPYVSYPEIHMKRNRTGSINSNPLYIPNPNVEPTPKPTKRRTKTGCLTCRRRRIKCDETKPFCLNCTKTNRECEGYPNSAAQMQAMGSVSPPELSVHSAQQPLIPTSIASSSAQTGDTFSGSSQSNFNTNDLNQMTSSSNLSTVTPIKQDHQKPMNLQGFPSAYQQHQYLQSNHNVPTNNSSSATSSTKPSVQSVGQASYPFLSSVSNFPSNFNSELFPFYFHDVVPSICAFEFDNNIALHFWSVTVPQFAQSMPCIANSLMAFASIKKLDVFGAYSHLTRALRCPMPGPNSFEYLLVSAFLTLTQLNLPAYDLNFCNNFIRKLSWSSSTKSNYVSLLIAMVVRELVFAILPRGCIWGFNGKPLSEVSVSRSHAPVSDSLFTIGLDILSQPTLSDDLHRERMVAWRDEYHVHLYSASRSPLTKVIDCVGHAVTKNNNDVLSGLQQLMQEECTDIAVLRTSYLCVLSLQNVFASNSKEFKLRAQIESHFGRLMLEHFMDCNVLNRPVL.

Residues 15-43 are disordered; it reads NRTGSINSNPLYIPNPNVEPTPKPTKRRT. A DNA-binding region (zn(2)-C6 fungal-type) is located at residues 46–76; that stretch reads GCLTCRRRRIKCDETKPFCLNCTKTNRECEG. Disordered regions lie at residues 110 to 146 and 174 to 193; these read ASSS…STVT and NHNV…KPSV. Positions 176–193 are enriched in low complexity; that stretch reads NVPTNNSSSATSSTKPSV.

Interacts with zfs1.

The protein resides in the nucleus. Induces sexual development and ascus formation. Also involved in calcium homeostasis. This is Transcriptional regulatory protein moc3 (moc3) from Schizosaccharomyces pombe (strain 972 / ATCC 24843) (Fission yeast).